A 376-amino-acid chain; its full sequence is Alanine racemase (376 aa).

Lys-44 serves as the catalytic Proton acceptor; specific for D-alanine. Lys-44 carries the post-translational modification N6-(pyridoxal phosphate)lysine. Residue Arg-139 coordinates substrate. Tyr-271 functions as the Proton acceptor; specific for L-alanine in the catalytic mechanism. A substrate-binding site is contributed by Met-319.

Belongs to the alanine racemase family. The cofactor is pyridoxal 5'-phosphate.

The enzyme catalyses L-alanine = D-alanine. The protein operates within amino-acid biosynthesis; D-alanine biosynthesis; D-alanine from L-alanine: step 1/1. Catalyzes the interconversion of L-alanine and D-alanine. May also act on other amino acids. This chain is Alanine racemase (alr), found in Bordetella petrii (strain ATCC BAA-461 / DSM 12804 / CCUG 43448).